Here is a 262-residue protein sequence, read N- to C-terminus: 7alpha-hydroxysteroid dehydrogenase (262 aa).

NADP(+) contacts are provided by residues 13-18 (SSTRGI), arginine 38, 63-64 (NA), and asparagine 90. The taurochenodeoxycholate site is built by threonine 145 and tyrosine 158. Residues tyrosine 158, lysine 162, and 191–195 (IGTRA) each bind NADP(+). Tyrosine 158 acts as the Proton acceptor in catalysis.

Belongs to the short-chain dehydrogenases/reductases (SDR) family. In terms of assembly, homotetramer. A dynamic equilibrium between dimers and tetramers seems to exist.

It carries out the reaction cholate + NADP(+) = 3alpha,12alpha-dihydroxy-7-oxo-5beta-cholanate + NADPH + H(+). The catalysed reaction is chenodeoxycholate + NADP(+) = 7-oxolithocholate + NADPH + H(+). It catalyses the reaction 3alpha,7alpha-dihydroxy-12-oxo-5beta-cholanate + NADP(+) = 7,12-dioxo-lithocholate + NADPH + H(+). The enzyme catalyses 7alpha-hydroxy-3,12-dioxo-5beta-cholanate + NADP(+) = dehydrocholate + NADPH + H(+). It carries out the reaction glycochenodeoxycholate + NADP(+) = 7-oxoglycolithocholate + NADPH + H(+). The catalysed reaction is taurochenodeoxycholate + NADP(+) = 7-oxotaurolithocholate + NADPH + H(+). With respect to regulation, activated by metal ions such as Mg(2+), Na(+) and K(+). 7alpha-hydroxysteroid dehydrogenase that catalyzes the NADP(+)-dependent oxidation of the 7alpha-hydroxy group of 7alpha-hydroxysteroids, such as cholate, chenodeoxycholate, glycochenodeoxycholate and taurochenodeoxycholate, to the corresponding 7-oxosteroids. Is also able to catalyze the reverse reduction reactions. Together with 7beta-HSDH encoded in the adjacent gene, is likely involved in the epimerization of the hydroxy group at C-7 of primary bile acids through 7-keto bile acid intermediates. The chain is 7alpha-hydroxysteroid dehydrogenase from Clostridium sardiniense (Clostridium absonum).